The following is a 202-amino-acid chain: IMP cyclohydrolase (202 aa).

This sequence belongs to the archaeal IMP cyclohydrolase family.

The enzyme catalyses IMP + H2O = 5-formamido-1-(5-phospho-D-ribosyl)imidazole-4-carboxamide. It participates in purine metabolism; IMP biosynthesis via de novo pathway; IMP from 5-formamido-1-(5-phospho-D-ribosyl)imidazole-4-carboxamide: step 1/1. Functionally, catalyzes the cyclization of 5-formylamidoimidazole-4-carboxamide ribonucleotide to IMP. This chain is IMP cyclohydrolase, found in Methanosphaera stadtmanae (strain ATCC 43021 / DSM 3091 / JCM 11832 / MCB-3).